A 252-amino-acid polypeptide reads, in one-letter code: Putative zinc finger CCCH domain-containing protein 58 (252 aa).

A C3H1-type zinc finger spans residues 35-62; sequence NHKSVLCMKWREGRCHNGVACRYAHGEE. Disordered regions lie at residues 71-95, 109-180, and 215-252; these read RVGG…SGST, RHGR…SAAD, and TATS…APPK. Composition is skewed to low complexity over residues 133 to 149 and 229 to 238; these read SARS…TTPP and ITTTTSSSTT.

The sequence is that of Putative zinc finger CCCH domain-containing protein 58 from Oryza sativa subsp. japonica (Rice).